The chain runs to 182 residues: Large ribosomal subunit protein bL25 (182 aa).

The protein belongs to the bacterial ribosomal protein bL25 family. CTC subfamily. In terms of assembly, part of the 50S ribosomal subunit; part of the 5S rRNA/L5/L18/L25 subcomplex. Contacts the 5S rRNA. Binds to the 5S rRNA independently of L5 and L18.

This is one of the proteins that binds to the 5S RNA in the ribosome where it forms part of the central protuberance. In Borrelia turicatae (strain 91E135), this protein is Large ribosomal subunit protein bL25.